A 622-amino-acid chain; its full sequence is Probable potassium transport system protein Kup (622 aa).

Helical transmembrane passes span 8 to 28 (LAAL…TSVL), 50 to 70 (VLSV…VVLV), 100 to 120 (GWLL…GVIT), 137 to 157 (PHFG…LFAV), 169 to 189 (FGPV…PHIV), 203 to 223 (ALGF…AVVL), 247 to 267 (WFSV…ALLL), 285 to 305 (ALVP…QALI), 337 to 357 (IYLP…VVMF), 366 to 386 (AYGI…FFVI), 392 to 412 (YPLA…LAFF), and 419 to 439 (LLQG…LMMT).

This sequence belongs to the HAK/KUP transporter (TC 2.A.72) family.

The protein localises to the cell inner membrane. The catalysed reaction is K(+)(in) + H(+)(in) = K(+)(out) + H(+)(out). Its function is as follows. Transport of potassium into the cell. Likely operates as a K(+):H(+) symporter. In Acidovorax ebreus (strain TPSY) (Diaphorobacter sp. (strain TPSY)), this protein is Probable potassium transport system protein Kup.